Reading from the N-terminus, the 161-residue chain is 6,7-dimethyl-8-ribityllumazine synthase (161 aa).

Residues W31, 63–65 (SFE), and 85–87 (VVI) each bind 5-amino-6-(D-ribitylamino)uracil. 90 to 91 (GT) lines the (2S)-2-hydroxy-3-oxobutyl phosphate pocket. Residue H93 is the Proton donor of the active site. F118 is a 5-amino-6-(D-ribitylamino)uracil binding site. A (2S)-2-hydroxy-3-oxobutyl phosphate-binding site is contributed by R132.

This sequence belongs to the DMRL synthase family.

The enzyme catalyses (2S)-2-hydroxy-3-oxobutyl phosphate + 5-amino-6-(D-ribitylamino)uracil = 6,7-dimethyl-8-(1-D-ribityl)lumazine + phosphate + 2 H2O + H(+). It participates in cofactor biosynthesis; riboflavin biosynthesis; riboflavin from 2-hydroxy-3-oxobutyl phosphate and 5-amino-6-(D-ribitylamino)uracil: step 1/2. Its function is as follows. Catalyzes the formation of 6,7-dimethyl-8-ribityllumazine by condensation of 5-amino-6-(D-ribitylamino)uracil with 3,4-dihydroxy-2-butanone 4-phosphate. This is the penultimate step in the biosynthesis of riboflavin. This is 6,7-dimethyl-8-ribityllumazine synthase from Arthrobacter sp. (strain FB24).